The chain runs to 232 residues: Small ribosomal subunit protein uS3 (232 aa).

In terms of domain architecture, KH type-2 spans 39–107 (IREILHKELK…DVVINIVEIR (69 aa)).

The protein belongs to the universal ribosomal protein uS3 family. As to quaternary structure, part of the 30S ribosomal subunit. Forms a tight complex with proteins S10 and S14.

Its function is as follows. Binds the lower part of the 30S subunit head. Binds mRNA in the 70S ribosome, positioning it for translation. In Rhodopseudomonas palustris (strain BisB18), this protein is Small ribosomal subunit protein uS3.